The chain runs to 646 residues: Threonine--tRNA ligase (646 aa).

Positions 1–63 (MAQISLTFPD…ETDAKIAIHT (63 aa)) constitute a TGS domain. Positions 247-544 (DHRKLGREME…LIENYAGKLP (298 aa)) are catalytic. The Zn(2+) site is built by Cys344, His395, and His521.

The protein belongs to the class-II aminoacyl-tRNA synthetase family. As to quaternary structure, homodimer. Zn(2+) serves as cofactor.

It localises to the cytoplasm. It carries out the reaction tRNA(Thr) + L-threonine + ATP = L-threonyl-tRNA(Thr) + AMP + diphosphate + H(+). Catalyzes the attachment of threonine to tRNA(Thr) in a two-step reaction: L-threonine is first activated by ATP to form Thr-AMP and then transferred to the acceptor end of tRNA(Thr). Also edits incorrectly charged L-seryl-tRNA(Thr). In Cereibacter sphaeroides (strain ATCC 17029 / ATH 2.4.9) (Rhodobacter sphaeroides), this protein is Threonine--tRNA ligase.